The sequence spans 408 residues: S-adenosylmethionine synthase (408 aa).

Position 142-147 (142-147) interacts with ATP; the sequence is GEGSGD.

It belongs to the AdoMet synthase 2 family. Mg(2+) is required as a cofactor.

The enzyme catalyses L-methionine + ATP + H2O = S-adenosyl-L-methionine + phosphate + diphosphate. Its pathway is amino-acid biosynthesis; S-adenosyl-L-methionine biosynthesis; S-adenosyl-L-methionine from L-methionine: step 1/1. Functionally, catalyzes the formation of S-adenosylmethionine from methionine and ATP. This chain is S-adenosylmethionine synthase, found in Halobacterium salinarum (strain ATCC 29341 / DSM 671 / R1).